Reading from the N-terminus, the 481-residue chain is UDP-N-acetylmuramoyl-L-alanyl-D-glutamate--L-lysine ligase (481 aa).

Serine 42 is a binding site for UDP-N-acetyl-alpha-D-muramoyl-L-alanyl-D-glutamate. Residue 118-124 coordinates ATP; the sequence is GTKGKTT. UDP-N-acetyl-alpha-D-muramoyl-L-alanyl-D-glutamate contacts are provided by residues glutamine 158, 160–161, serine 187, and arginine 195; that span reads TT. Lysine 229 carries the post-translational modification N6-carboxylysine. The short motif at 404–407 is the L-lysine recognition motif element; the sequence is DDPN.

The protein belongs to the MurCDEF family. MurE subfamily. In terms of processing, carboxylation is probably crucial for Mg(2+) binding and, consequently, for the gamma-phosphate positioning of ATP.

It localises to the cytoplasm. It catalyses the reaction UDP-N-acetyl-alpha-D-muramoyl-L-alanyl-D-glutamate + L-lysine + ATP = UDP-N-acetyl-alpha-D-muramoyl-L-alanyl-gamma-D-glutamyl-L-lysine + ADP + phosphate + H(+). It functions in the pathway cell wall biogenesis; peptidoglycan biosynthesis. In terms of biological role, catalyzes the addition of L-lysine to the nucleotide precursor UDP-N-acetylmuramoyl-L-alanyl-D-glutamate (UMAG) in the biosynthesis of bacterial cell-wall peptidoglycan. This Streptococcus pyogenes serotype M3 (strain SSI-1) protein is UDP-N-acetylmuramoyl-L-alanyl-D-glutamate--L-lysine ligase.